A 380-amino-acid chain; its full sequence is Erythronate-4-phosphate dehydrogenase (380 aa).

Substrate is bound by residues Ser45 and Thr66. Cys65 and Cys90 are disulfide-bonded. NAD(+) contacts are provided by residues 126 to 127 (QV), Asp146, Thr175, 206 to 208 (ASR), and Asp232. The active site involves Arg208. The active site involves Glu237. His254 functions as the Proton donor in the catalytic mechanism. Residue Gly257 participates in NAD(+) binding. Residue Tyr258 coordinates substrate.

Belongs to the D-isomer specific 2-hydroxyacid dehydrogenase family. PdxB subfamily. In terms of assembly, homodimer.

The protein resides in the cytoplasm. It catalyses the reaction 4-phospho-D-erythronate + NAD(+) = (R)-3-hydroxy-2-oxo-4-phosphooxybutanoate + NADH + H(+). It functions in the pathway cofactor biosynthesis; pyridoxine 5'-phosphate biosynthesis; pyridoxine 5'-phosphate from D-erythrose 4-phosphate: step 2/5. Functionally, catalyzes the oxidation of erythronate-4-phosphate to 3-hydroxy-2-oxo-4-phosphonooxybutanoate. The sequence is that of Erythronate-4-phosphate dehydrogenase from Pseudomonas aeruginosa (strain ATCC 15692 / DSM 22644 / CIP 104116 / JCM 14847 / LMG 12228 / 1C / PRS 101 / PAO1).